Consider the following 232-residue polypeptide: MSSLMKKRRRKSSSNTLRNIVSCRISHSWKEGNEPVTQWKAIVLDQLPTNPSLYFVKYDGIDSIYVLELYSDDRILNLKVLPPIVVFPQVRDAHLARALVGRAVQHKFERKDGSEVNWRGVVLAQVPIMKDLFYITYKKDPALYAYQLLDDYKEGNLHMIPDTPPAEERSGDDSDVLIGNWVEYTRKDGSKKFGKVVYQVLANPSVYFIKFHGDIHIYVYTMVPKILEVEKS.

It belongs to the SPIN/STSY family. In terms of tissue distribution, expressed in testis (at protein level).

The polypeptide is Y-linked testis-specific protein 1 (Ssty1) (Mus musculus (Mouse)).